Reading from the N-terminus, the 343-residue chain is Methionine import ATP-binding protein MetN (343 aa).

The region spanning Ile2–Ile241 is the ABC transporter domain. Gly38–Ser45 serves as a coordination point for ATP.

It belongs to the ABC transporter superfamily. Methionine importer (TC 3.A.1.24) family. In terms of assembly, the complex is composed of two ATP-binding proteins (MetN), two transmembrane proteins (MetI) and a solute-binding protein (MetQ).

The protein resides in the cell inner membrane. It carries out the reaction L-methionine(out) + ATP + H2O = L-methionine(in) + ADP + phosphate + H(+). The enzyme catalyses D-methionine(out) + ATP + H2O = D-methionine(in) + ADP + phosphate + H(+). Functionally, part of the ABC transporter complex MetNIQ involved in methionine import. Responsible for energy coupling to the transport system. The polypeptide is Methionine import ATP-binding protein MetN (Shigella flexneri serotype 5b (strain 8401)).